Reading from the N-terminus, the 253-residue chain is uncharacterized protein (253 aa).

A disordered region spans residues T211–T241.

This is an uncharacterized protein from Ictalurid herpesvirus 1 (strain Auburn) (IcHV-1).